We begin with the raw amino-acid sequence, 300 residues long: NADH-ubiquinone oxidoreductase chain 2 (300 aa).

Transmembrane regions (helical) follow at residues 4–24, 29–49, 58–78, 87–107, 122–142, 165–185, 201–221, 231–251, and 267–287; these read FFCI…NVLV, FLLM…YVGI, SLGL…IVMM, FWVF…FLTF, FSAF…LFVL, FLSV…MAFL, VLLV…IFVL, FLLF…LWLV, and VLFF…FSKI.

The protein belongs to the complex I subunit 2 family.

Its subcellular location is the mitochondrion inner membrane. The enzyme catalyses a ubiquinone + NADH + 5 H(+)(in) = a ubiquinol + NAD(+) + 4 H(+)(out). In terms of biological role, core subunit of the mitochondrial membrane respiratory chain NADH dehydrogenase (Complex I) that is believed to belong to the minimal assembly required for catalysis. Complex I functions in the transfer of electrons from NADH to the respiratory chain. The immediate electron acceptor for the enzyme is believed to be ubiquinone. The protein is NADH-ubiquinone oxidoreductase chain 2 (ND2) of Ascaris suum (Pig roundworm).